A 310-amino-acid polypeptide reads, in one-letter code: Protein LRATD2 (310 aa).

Residues M1 to P76 are disordered. Residues P54 to D64 are compositionally biased toward gly residues. Pro residues predominate over residues G65–Y74. Residues V122 to I217 enclose the LRAT domain. A disordered region spans residues H274–H310. Positions T289–P298 are enriched in pro residues. Residues S300 to H310 are compositionally biased toward acidic residues.

The protein belongs to the LRATD family. Expressed in esophageal squamous cell carcinomas.

This chain is Protein LRATD2, found in Homo sapiens (Human).